Reading from the N-terminus, the 449-residue chain is Tubulin alpha-B chain (449 aa).

GTP is bound by residues Gln11, Glu71, Ser140, Gly144, Thr145, Thr179, Asn206, and Asn228. Glu71 contacts Mg(2+). Glu254 is a catalytic residue.

Belongs to the tubulin family. Dimer of alpha and beta chains. A typical microtubule is a hollow water-filled tube with an outer diameter of 25 nm and an inner diameter of 15 nM. Alpha-beta heterodimers associate head-to-tail to form protofilaments running lengthwise along the microtubule wall with the beta-tubulin subunit facing the microtubule plus end conferring a structural polarity. Microtubules usually have 13 protofilaments but different protofilament numbers can be found in some organisms and specialized cells. Mg(2+) is required as a cofactor.

It localises to the cytoplasm. It is found in the cytoskeleton. The enzyme catalyses GTP + H2O = GDP + phosphate + H(+). Its function is as follows. Tubulin is the major constituent of microtubules, a cylinder consisting of laterally associated linear protofilaments composed of alpha- and beta-tubulin heterodimers. Microtubules grow by the addition of GTP-tubulin dimers to the microtubule end, where a stabilizing cap forms. Below the cap, tubulin dimers are in GDP-bound state, owing to GTPase activity of alpha-tubulin. This Neurospora crassa (strain ATCC 24698 / 74-OR23-1A / CBS 708.71 / DSM 1257 / FGSC 987) protein is Tubulin alpha-B chain (tba-2).